A 290-amino-acid polypeptide reads, in one-letter code: 4-hydroxybenzoate octaprenyltransferase (290 aa).

The next 6 membrane-spanning stretches (helical) occupy residues 41–61, 89–109, 133–153, 158–178, 202–224, and 269–289; these read WPLL…GCAM, WEAV…IQPL, FFAI…PMAF, DTVP…SVAY, FGRF…YVWI, and WLGG…GTAG.

It belongs to the UbiA prenyltransferase family. Mg(2+) serves as cofactor.

It is found in the cell inner membrane. It carries out the reaction all-trans-octaprenyl diphosphate + 4-hydroxybenzoate = 4-hydroxy-3-(all-trans-octaprenyl)benzoate + diphosphate. It functions in the pathway cofactor biosynthesis; ubiquinone biosynthesis. Functionally, catalyzes the prenylation of para-hydroxybenzoate (PHB) with an all-trans polyprenyl group. Mediates the second step in the final reaction sequence of ubiquinone-8 (UQ-8) biosynthesis, which is the condensation of the polyisoprenoid side chain with PHB, generating the first membrane-bound Q intermediate 3-octaprenyl-4-hydroxybenzoate. The protein is 4-hydroxybenzoate octaprenyltransferase of Burkholderia ambifaria (strain ATCC BAA-244 / DSM 16087 / CCUG 44356 / LMG 19182 / AMMD) (Burkholderia cepacia (strain AMMD)).